Here is a 396-residue protein sequence, read N- to C-terminus: Elongation factor Tu (396 aa).

In terms of domain architecture, tr-type G spans 10–205 (KPHVNIGTIG…AVDESIPDPV (196 aa)). Positions 19 to 26 (GHVDHGKT) are G1. 19-26 (GHVDHGKT) contributes to the GTP binding site. Residue threonine 26 coordinates Mg(2+). Residues 62–66 (GITIN) are G2. Residues 83–86 (DAPG) form a G3 region. GTP is bound by residues 83–87 (DAPGH) and 138–141 (NKAD). The G4 stretch occupies residues 138–141 (NKAD). A G5 region spans residues 175-177 (SAL).

Belongs to the TRAFAC class translation factor GTPase superfamily. Classic translation factor GTPase family. EF-Tu/EF-1A subfamily. Monomer.

Its subcellular location is the cytoplasm. It catalyses the reaction GTP + H2O = GDP + phosphate + H(+). In terms of biological role, GTP hydrolase that promotes the GTP-dependent binding of aminoacyl-tRNA to the A-site of ribosomes during protein biosynthesis. This chain is Elongation factor Tu, found in Mycolicibacterium gilvum (strain PYR-GCK) (Mycobacterium gilvum (strain PYR-GCK)).